Reading from the N-terminus, the 215-residue chain is RNA pyrophosphohydrolase (215 aa).

One can recognise a Nudix hydrolase domain in the interval 6–149; that stretch reads GFRPNVGIIL…KRDVYQLALT (144 aa). Positions 38–59 match the Nudix box motif; that stretch reads GGIKYGETPMQAMYRELHEETG.

It belongs to the Nudix hydrolase family. RppH subfamily. It depends on a divalent metal cation as a cofactor.

Accelerates the degradation of transcripts by removing pyrophosphate from the 5'-end of triphosphorylated RNA, leading to a more labile monophosphorylated state that can stimulate subsequent ribonuclease cleavage. The polypeptide is RNA pyrophosphohydrolase (Burkholderia multivorans (strain ATCC 17616 / 249)).